Consider the following 124-residue polypeptide: Small ribosomal subunit protein uS12 (124 aa).

The tract at residues 105–124 (SGVNDRRQGRSKYGAKRPKS) is disordered. Positions 113-124 (GRSKYGAKRPKS) are enriched in basic residues.

It belongs to the universal ribosomal protein uS12 family. In terms of assembly, part of the 30S ribosomal subunit. Contacts proteins S8 and S17. May interact with IF1 in the 30S initiation complex.

Its function is as follows. With S4 and S5 plays an important role in translational accuracy. In terms of biological role, interacts with and stabilizes bases of the 16S rRNA that are involved in tRNA selection in the A site and with the mRNA backbone. Located at the interface of the 30S and 50S subunits, it traverses the body of the 30S subunit contacting proteins on the other side and probably holding the rRNA structure together. The combined cluster of proteins S8, S12 and S17 appears to hold together the shoulder and platform of the 30S subunit. This chain is Small ribosomal subunit protein uS12, found in Idiomarina loihiensis (strain ATCC BAA-735 / DSM 15497 / L2-TR).